The primary structure comprises 297 residues: Ribosomal RNA small subunit methyltransferase A (297 aa).

Residues N31, L33, G58, E79, D104, and N129 each contribute to the S-adenosyl-L-methionine site.

Belongs to the class I-like SAM-binding methyltransferase superfamily. rRNA adenine N(6)-methyltransferase family. RsmA subfamily.

Its subcellular location is the cytoplasm. The catalysed reaction is adenosine(1518)/adenosine(1519) in 16S rRNA + 4 S-adenosyl-L-methionine = N(6)-dimethyladenosine(1518)/N(6)-dimethyladenosine(1519) in 16S rRNA + 4 S-adenosyl-L-homocysteine + 4 H(+). Its function is as follows. Specifically dimethylates two adjacent adenosines (A1518 and A1519) in the loop of a conserved hairpin near the 3'-end of 16S rRNA in the 30S particle. May play a critical role in biogenesis of 30S subunits. This Pediococcus pentosaceus (strain ATCC 25745 / CCUG 21536 / LMG 10740 / 183-1w) protein is Ribosomal RNA small subunit methyltransferase A.